The following is a 352-amino-acid chain: Guanine nucleotide-binding protein alpha-7 subunit (352 aa).

Glycine 2 is lipidated: N-myristoyl glycine. Cysteine 4 carries the S-palmitoyl cysteine lipid modification. Residues 32-352 form the G-alpha domain; that stretch reads RIIKLLLLGA…AKNLKSMGLC (321 aa). Positions 35 to 48 are G1 motif; that stretch reads KLLLLGAGESGKST. GTP contacts are provided by residues 40–47, 174–180, 199–203, 268–271, and alanine 324; these read GAGESGKS, LRTRIKT, DVGGQ, and NKKD. Mg(2+)-binding residues include serine 47 and threonine 180. The tract at residues 172–180 is G2 motif; the sequence is DLLRTRIKT. Residues 195-204 form a G3 motif region; the sequence is FRVIDVGGQR. The tract at residues 264–271 is G4 motif; sequence ILFLNKKD. Residues 322–327 are G5 motif; sequence TCATDT.

It belongs to the G-alpha family. G(i/o/t/z) subfamily. In terms of assembly, g proteins are composed of 3 units; alpha, beta and gamma. The alpha chain contains the guanine nucleotide binding site.

Functionally, guanine nucleotide-binding proteins (G proteins) are involved as modulators or transducers in various transmembrane signaling systems. In Caenorhabditis elegans, this protein is Guanine nucleotide-binding protein alpha-7 subunit (gpa-7).